Here is a 677-residue protein sequence, read N- to C-terminus: UvrABC system protein B (677 aa).

The Helicase ATP-binding domain maps to 24 to 412 (EGVLEGVPAQ…EGIVVEQVIR (389 aa)). 37–44 (GVTGSGKT) contacts ATP. The Beta-hairpin signature appears at 90-113 (YYDYYQPEAYLPSSDTYIEKDLAI). Positions 429-591 (QIDDLMEEIQ…ITPQQIKKAR (163 aa)) constitute a Helicase C-terminal domain. Positions 635 to 670 (EKSMERTRKLMQEAAKKLEFIEAAQYRDELLKMEDL) constitute a UVR domain.

This sequence belongs to the UvrB family. In terms of assembly, forms a heterotetramer with UvrA during the search for lesions. Interacts with UvrC in an incision complex.

It is found in the cytoplasm. Functionally, the UvrABC repair system catalyzes the recognition and processing of DNA lesions. A damage recognition complex composed of 2 UvrA and 2 UvrB subunits scans DNA for abnormalities. Upon binding of the UvrA(2)B(2) complex to a putative damaged site, the DNA wraps around one UvrB monomer. DNA wrap is dependent on ATP binding by UvrB and probably causes local melting of the DNA helix, facilitating insertion of UvrB beta-hairpin between the DNA strands. Then UvrB probes one DNA strand for the presence of a lesion. If a lesion is found the UvrA subunits dissociate and the UvrB-DNA preincision complex is formed. This complex is subsequently bound by UvrC and the second UvrB is released. If no lesion is found, the DNA wraps around the other UvrB subunit that will check the other stand for damage. The chain is UvrABC system protein B from Bacteroides fragilis (strain YCH46).